We begin with the raw amino-acid sequence, 68 residues long: Phycobilisome 7.8 kDa linker polypeptide, allophycocyanin-associated, core (68 aa).

The CpcD-like domain maps to alanine 2–alanine 57.

It belongs to the phycobilisome linker protein family.

It localises to the cellular thylakoid membrane. Functionally, rod linker protein, associated with allophycocyanin. Linker polypeptides determine the state of aggregation and the location of the disk-shaped phycobiliprotein units within the phycobilisome and modulate their spectroscopic properties in order to mediate a directed and optimal energy transfer. This Microchaete diplosiphon (Fremyella diplosiphon) protein is Phycobilisome 7.8 kDa linker polypeptide, allophycocyanin-associated, core (apcC).